A 133-amino-acid chain; its full sequence is Small ribosomal subunit protein uS8 (133 aa).

It belongs to the universal ribosomal protein uS8 family. As to quaternary structure, part of the 30S ribosomal subunit.

Functionally, one of the primary rRNA binding proteins, it binds directly to 16S rRNA central domain where it helps coordinate assembly of the platform of the 30S subunit. The chain is Small ribosomal subunit protein uS8 from Metallosphaera sedula (strain ATCC 51363 / DSM 5348 / JCM 9185 / NBRC 15509 / TH2).